The sequence spans 98 residues: NADH-ubiquinone oxidoreductase chain 4L (98 aa).

3 consecutive transmembrane segments (helical) span residues 1-21 (MPST…GLLL), 29-49 (SLLC…LMAL), and 61-81 (IVLM…LVMV).

Belongs to the complex I subunit 4L family. In terms of assembly, core subunit of respiratory chain NADH dehydrogenase (Complex I) which is composed of 45 different subunits.

The protein resides in the mitochondrion inner membrane. It catalyses the reaction a ubiquinone + NADH + 5 H(+)(in) = a ubiquinol + NAD(+) + 4 H(+)(out). Functionally, core subunit of the mitochondrial membrane respiratory chain NADH dehydrogenase (Complex I) which catalyzes electron transfer from NADH through the respiratory chain, using ubiquinone as an electron acceptor. Part of the enzyme membrane arm which is embedded in the lipid bilayer and involved in proton translocation. This chain is NADH-ubiquinone oxidoreductase chain 4L (MT-ND4L), found in Choloepus didactylus (Southern two-toed sloth).